The sequence spans 468 residues: 6-phospho-beta-galactosidase (468 aa).

Residues glutamine 19, histidine 116, asparagine 159, glutamate 160, and asparagine 297 each contribute to the D-galactose 6-phosphate site. The Proton donor role is filled by glutamate 160. Catalysis depends on glutamate 375, which acts as the Nucleophile. D-galactose 6-phosphate-binding residues include serine 428, tryptophan 429, lysine 435, and tyrosine 437.

Belongs to the glycosyl hydrolase 1 family.

It carries out the reaction a 6-phospho-beta-D-galactoside + H2O = D-galactose 6-phosphate + an alcohol. Its pathway is carbohydrate metabolism; lactose degradation; D-galactose 6-phosphate and beta-D-glucose from lactose 6-phosphate: step 1/1. This Streptococcus pyogenes serotype M12 (strain MGAS2096) protein is 6-phospho-beta-galactosidase.